We begin with the raw amino-acid sequence, 512 residues long: Glutathione-binding protein GsiB (512 aa).

An N-terminal signal peptide occupies residues 1–26; sequence MARAVHRSGLVALGIATALMASCAFA.

The protein belongs to the bacterial solute-binding protein 5 family. The complex is composed of two ATP-binding proteins (GsiA), two transmembrane proteins (GsiC and GsiD) and a solute-binding protein (GsiB).

Its subcellular location is the periplasm. Its function is as follows. Part of the ABC transporter complex GsiABCD involved in glutathione import. Binds glutathione. The sequence is that of Glutathione-binding protein GsiB from Shigella flexneri.